The primary structure comprises 346 residues: MALLKVKFDQKKRVKLAQGLWLMNWLSVLAGIVLFSLGLFLKIELRKRSEVMNNSESHFVPNSLIGVGVLSCVFNSLAGKICYDALDPAKYAKWKPWLKPYLAVCIFFNVILFLVALCCFLLRGSLESTLAYGLKNGMKYYRDTDTPGRCFMKKTIDMLQIEFKCCGNNGFRDWFEIQWISNRYLDFSSKEVKDRIKSNVDGRYLVDGVPFSCCNPSSPRPCIQYQLTNNSAHYSYDHQTEELNLWLRGCRAALLNYYSSLMNSMGVVTLLVWLFEVSITAGLRYLHTALESVSNPEDPECESEGWLLEKSVPETWKAFLESFKKLGKSNQVEAEGADAGPAPEAG.

The Cytoplasmic segment spans residues 1–24 (MALLKVKFDQKKRVKLAQGLWLMN). A helical transmembrane segment spans residues 25–43 (WLSVLAGIVLFSLGLFLKI). Over 44 to 61 (ELRKRSEVMNNSESHFVP) the chain is Lumenal. N53 is a glycosylation site (N-linked (GlcNAc...) asparagine). Residues 62-80 (NSLIGVGVLSCVFNSLAGK) form a helical membrane-spanning segment. Residues 81–99 (ICYDALDPAKYAKWKPWLK) lie on the Cytoplasmic side of the membrane. The chain crosses the membrane as a helical span at residues 100–123 (PYLAVCIFFNVILFLVALCCFLLR). Residues 124–264 (GSLESTLAYG…LNYYSSLMNS (141 aa)) are Lumenal-facing. N229 carries an N-linked (GlcNAc...) asparagine glycan. A helical transmembrane segment spans residues 265 to 290 (MGVVTLLVWLFEVSITAGLRYLHTAL). Residues 291 to 346 (ESVSNPEDPECESEGWLLEKSVPETWKAFLESFKKLGKSNQVEAEGADAGPAPEAG) are Cytoplasmic-facing. The tract at residues 341–346 (PAPEAG) is interaction with MREG.

Belongs to the PRPH2/ROM1 family. In terms of assembly, homodimer; disulfide-linked. Forms a homotetramer. Forms a heterotetramer with ROM1. Homotetramer and heterotetramer core complexes go on to form higher order complexes by formation of intermolecular disulfide bonds. Interacts with MREG. Interacts with STX3 isoform 3B. Interacts with SNAP25. As to expression, expressed in the retina (at protein level).

The protein resides in the membrane. Its subcellular location is the cell projection. It is found in the cilium. It localises to the photoreceptor outer segment. The protein localises to the photoreceptor inner segment. Its function is as follows. Essential for retina photoreceptor outer segment disk morphogenesis, may also play a role with ROM1 in the maintenance of outer segment disk structure. Required for the maintenance of retinal outer nuclear layer thickness. Required for the correct development and organization of the photoreceptor inner segment. The protein is Peripherin-2 (Prph2) of Mus musculus (Mouse).